The sequence spans 155 residues: Ribosome maturation factor RimP (155 aa).

Belongs to the RimP family.

The protein resides in the cytoplasm. Required for maturation of 30S ribosomal subunits. The chain is Ribosome maturation factor RimP from Deinococcus geothermalis (strain DSM 11300 / CIP 105573 / AG-3a).